A 169-amino-acid chain; its full sequence is Allophycocyanin subunit beta-18 (169 aa).

Asn-72 carries the post-translational modification N4-methylasparagine. Cys-82 contributes to the (2R,3E)-phycocyanobilin binding site.

Belongs to the phycobiliprotein family. Heterodimer of an alpha and a beta chain. Post-translationally, contains one covalently linked phycocyanobilin chromophore.

The protein resides in the plastid. Its subcellular location is the cyanelle thylakoid membrane. Light-harvesting photosynthetic bile pigment-protein from the phycobiliprotein complex. Allophycocyanin has a maximum absorption at approximately 650 nanometers. The sequence is that of Allophycocyanin subunit beta-18 (apcF) from Cyanophora paradoxa.